Consider the following 521-residue polypeptide: Glycogen synthase (521 aa).

An ADP-alpha-D-glucose-binding site is contributed by Lys-18.

It belongs to the glycosyltransferase 1 family. Bacterial/plant glycogen synthase subfamily.

It catalyses the reaction [(1-&gt;4)-alpha-D-glucosyl](n) + ADP-alpha-D-glucose = [(1-&gt;4)-alpha-D-glucosyl](n+1) + ADP + H(+). It functions in the pathway glycan biosynthesis; glycogen biosynthesis. Functionally, synthesizes alpha-1,4-glucan chains using ADP-glucose. This chain is Glycogen synthase, found in Bordetella petrii (strain ATCC BAA-461 / DSM 12804 / CCUG 43448).